The following is a 657-amino-acid chain: C4-dicarboxylate transport sensor protein DctS (657 aa).

At 1–26 (MRDTTGGPAGAEVWTVPGLLGARKLD) the chain is on the cytoplasmic side. A helical transmembrane segment spans residues 27–51 (LLALIPLVAIVALMTLVGALLFAVA). The Periplasmic segment spans residues 52 to 252 (QSDANRARAK…AYDAPDAFGN (201 aa)). Residues 253–273 (AALLAAIGALSVFAVLAMVVL) traverse the membrane as a helical segment. Topologically, residues 274–657 (HRNALRRRMA…LPVPQEGAPA (384 aa)) are cytoplasmic. Residues 289–361 (AEMAFRRAME…ARQRQLIEGQ (73 aa)) enclose the PAS domain. Positions 365 to 417 (QAFETRFRRSDGSEIEVQVFEAPLIDAGGRHRGWMGSVIDITQAKQAARLARA) constitute a PAC domain. The tract at residues 407–422 (QAKQAARLARAQDESL) is inter-domain linker. Residues 437 to 652 (TLAHELNQPL…VFTVTLPVPQ (216 aa)) enclose the Histidine kinase domain. Phosphohistidine; by autocatalysis is present on His-440.

The protein localises to the cell inner membrane. The enzyme catalyses ATP + protein L-histidine = ADP + protein N-phospho-L-histidine.. Functionally, member of the two-component regulatory system DctS/DctR involved in the transport of C4-dicarboxylates. DctS functions as a membrane-associated protein kinase that phosphorylates DctR in response to environmental signals. The sequence is that of C4-dicarboxylate transport sensor protein DctS (dctS) from Rhodobacter capsulatus (Rhodopseudomonas capsulata).